The chain runs to 326 residues: Probable cell division protein WhiA (326 aa).

The segment at residues 275–308 is a DNA-binding region (H-T-H motif); that stretch reads SLDELGRLADPPMTKDAIAGRIRRLLAMADKRAL.

The protein belongs to the WhiA family.

Involved in cell division and chromosome segregation. This Paenarthrobacter aurescens (strain TC1) protein is Probable cell division protein WhiA.